The sequence spans 468 residues: Chromosomal replication initiator protein DnaA (468 aa).

The tract at residues 1-84 (MSSSLWLQCL…RFEVGSRPVA (84 aa)) is domain I, interacts with DnaA modulators. Residues 81–104 (RPVAAPKPAPTRTPADVAAESSAP) form a disordered region. The segment at 84–131 (AAPKPAPTRTPADVAAESSAPAQLQARKPVHKTWDDDAQAIADINHRS) is domain II. Positions 132 to 348 (NVNPKHKFNN…GALNRVIANA (217 aa)) are domain III, AAA+ region. ATP-binding residues include G176, G178, K179, and T180. Residues 349–468 (NFTGRPITID…YSNLIRTLSS (120 aa)) are domain IV, binds dsDNA.

This sequence belongs to the DnaA family. In terms of assembly, oligomerizes as a right-handed, spiral filament on DNA at oriC.

The protein localises to the cytoplasm. Its function is as follows. Plays an essential role in the initiation and regulation of chromosomal replication. ATP-DnaA binds to the origin of replication (oriC) to initiate formation of the DNA replication initiation complex once per cell cycle. Binds the DnaA box (a 9 base pair repeat at the origin) and separates the double-stranded (ds)DNA. Forms a right-handed helical filament on oriC DNA; dsDNA binds to the exterior of the filament while single-stranded (ss)DNA is stabiized in the filament's interior. The ATP-DnaA-oriC complex binds and stabilizes one strand of the AT-rich DNA unwinding element (DUE), permitting loading of DNA polymerase. After initiation quickly degrades to an ADP-DnaA complex that is not apt for DNA replication. Binds acidic phospholipids. The chain is Chromosomal replication initiator protein DnaA from Vibrio campbellii (strain ATCC BAA-1116).